Reading from the N-terminus, the 77-residue chain is Acyl carrier protein homolog (77 aa).

The Carrier domain occupies 1 to 76 (MSINIKDLIM…DLINAFEDVL (76 aa)). Serine 36 carries the O-(pantetheine 4'-phosphoryl)serine modification.

Post-translationally, 4'-phosphopantetheine is transferred from CoA to a specific serine of the apo-ACP-like protein.

It participates in lipid metabolism; fatty acid biosynthesis. Carrier of the growing fatty acid chain in fatty acid biosynthesis. This chain is Acyl carrier protein homolog, found in Ureaplasma parvum serovar 3 (strain ATCC 700970).